The chain runs to 313 residues: Ankyrin repeat family A protein 2 (313 aa).

ANK repeat units follow at residues 148–180 (ANSL…HTDE), 181–213 (EGFT…LLGK), 214–246 (GRES…EYDW), 247–279 (NGGT…IETD), and 280–313 (SGYN…NIKE).

As to quaternary structure, interacts (via ANK repeats) with CCDC8 (via PxLPxI/L motif); mediates the interaction with the 3M complex which is composed of CCDC8, CUL7 and OBSL1. Interacts (via ANK repeats) with HDAC4 (via PxLPxI/L motif). Interacts (via ANK repeats) with HDAC5 (via PxLPxI/L motif). Interacts (via ANK repeats) with LRP2/megalin (via PxLPxI/L motif). Interacts (via ANK repeats) with RFX7 (via PxLPxI/L motif). Interacts with AHRR. Interacts with NEK6.

The protein localises to the cytoplasm. It is found in the cytoskeleton. Its subcellular location is the membrane. May regulate the interaction between the 3M complex and the histone deacetylases HDAC4 and HDAC5. May also regulate LRP2/megalin. In Homo sapiens (Human), this protein is Ankyrin repeat family A protein 2 (ANKRA2).